Consider the following 700-residue polypeptide: Glycine--tRNA ligase beta subunit (700 aa).

It belongs to the class-II aminoacyl-tRNA synthetase family. In terms of assembly, tetramer of two alpha and two beta subunits.

The protein localises to the cytoplasm. The enzyme catalyses tRNA(Gly) + glycine + ATP = glycyl-tRNA(Gly) + AMP + diphosphate. The chain is Glycine--tRNA ligase beta subunit from Janthinobacterium sp. (strain Marseille) (Minibacterium massiliensis).